The following is a 67-amino-acid chain: Conotoxin TsMMSK-011 (67 aa).

The signal sequence occupies residues 1-20; it reads MMSKLGVLLTICLLLFPLTA. A propeptide spanning residues 21 to 50 is cleaved from the precursor; the sequence is VQLDGDQPADLPALRTQDIATDHSPWFDPV. 3 cysteine pairs are disulfide-bonded: Cys53–Cys65, Cys54–Cys61, and Cys58–Cys64. Pro63 carries the 4-hydroxyproline modification.

This sequence belongs to the conotoxin M superfamily. Expressed by the venom duct.

It localises to the secreted. In Conus tessulatus (Tessellate cone), this protein is Conotoxin TsMMSK-011.